A 415-amino-acid polypeptide reads, in one-letter code: MKGSYKSRWVIVIVVVIAAIAAFWFWQGRNDSRSAAPGATKQAQQSPAGGRRGMRSGPLAPVQAATAVEQAVPRYLTGLGTIIAANTVTVRSRVDGQLMALHFQEGQQVKAGDLLAEIDPSQFKVALAQTQGQLAKDKATLANARRDLARYQQLAKTNLVSRQELDAQQALVSETEGTIKADEASVASAQLQLDWSRITAPVDGRVGLKQVDVGNQISSGDTTGIVVITQTHPIDLVFTLPESDIATVVQAQKAGKPLVVEAWDRTNSKKLSEGTLLSLDNQIDATTGTIKVKARFNNQDDALFPNQFVNARMLVDTEQNAVVIPTAALQMGNEGHFVWVLNSENKVSKHLVTPGIQDSQKVVIRAGISAGDRVVTDGIDRLTEGAKVEVVEAQSATTPEEKATSREYAKKGARS.

The signal sequence occupies residues 1–21; that stretch reads MKGSYKSRWVIVIVVVIAAIA. Disordered stretches follow at residues 32–60 and 392–415; these read SRSAAPGATKQAQQSPAGGRRGMRSGPLA and EAQSATTPEEKATSREYAKKGARS. Over residues 399 to 415 the composition is skewed to basic and acidic residues; that stretch reads PEEKATSREYAKKGARS.

It belongs to the membrane fusion protein (MFP) (TC 8.A.1) family. Part of a tripartite efflux system composed of MdtA, MdtB and MdtC.

The protein resides in the cell inner membrane. Its function is as follows. The MdtABC tripartite complex confers resistance against novobiocin and deoxycholate. This chain is Multidrug resistance protein MdtA, found in Escherichia coli (strain 55989 / EAEC).